The sequence spans 207 residues: MSDYHGPLRVGIGGPVGSGKTALMDLLCKTLRDRYQIAAITNDIYTKWDAEFLVRSGSLTQDRIVGVETGGCPHTAIREDASMNLAAVADMRAKFPDLDLVLIESGGDNLAATFSPELADLTIYVIDVAAGDKIPSKGGPGITRSDLLVINKIDLAPYVGASLDKMQIDAKRMRGERPFVMTNLKTQEGLDRIVGFIEAKGGLRAGS.

Position 14-21 (14-21 (GPVGSGKT)) interacts with GTP.

The protein belongs to the SIMIBI class G3E GTPase family. UreG subfamily. As to quaternary structure, homodimer. UreD, UreF and UreG form a complex that acts as a GTP-hydrolysis-dependent molecular chaperone, activating the urease apoprotein by helping to assemble the nickel containing metallocenter of UreC. The UreE protein probably delivers the nickel.

The protein resides in the cytoplasm. Facilitates the functional incorporation of the urease nickel metallocenter. This process requires GTP hydrolysis, probably effectuated by UreG. The polypeptide is Urease accessory protein UreG (Rhodopseudomonas palustris (strain BisB18)).